We begin with the raw amino-acid sequence, 316 residues long: Lipoyl synthase (316 aa).

Residues Cys66, Cys71, Cys77, Cys92, Cys96, Cys99, and Ser306 each coordinate [4Fe-4S] cluster. Residues 78-295 (FNRGTATFMI…NLIAFDLGFK (218 aa)) enclose the Radical SAM core domain.

Belongs to the radical SAM superfamily. Lipoyl synthase family. The cofactor is [4Fe-4S] cluster.

Its subcellular location is the cytoplasm. The catalysed reaction is [[Fe-S] cluster scaffold protein carrying a second [4Fe-4S](2+) cluster] + N(6)-octanoyl-L-lysyl-[protein] + 2 oxidized [2Fe-2S]-[ferredoxin] + 2 S-adenosyl-L-methionine + 4 H(+) = [[Fe-S] cluster scaffold protein] + N(6)-[(R)-dihydrolipoyl]-L-lysyl-[protein] + 4 Fe(3+) + 2 hydrogen sulfide + 2 5'-deoxyadenosine + 2 L-methionine + 2 reduced [2Fe-2S]-[ferredoxin]. It functions in the pathway protein modification; protein lipoylation via endogenous pathway; protein N(6)-(lipoyl)lysine from octanoyl-[acyl-carrier-protein]: step 2/2. In terms of biological role, catalyzes the radical-mediated insertion of two sulfur atoms into the C-6 and C-8 positions of the octanoyl moiety bound to the lipoyl domains of lipoate-dependent enzymes, thereby converting the octanoylated domains into lipoylated derivatives. The protein is Lipoyl synthase of Wigglesworthia glossinidia brevipalpis.